We begin with the raw amino-acid sequence, 467 residues long: DNA polymerase IV (467 aa).

Residues 5–187 (VLHIDMDAFF…LPVGALWGVG (183 aa)) form the UmuC domain. 2 residues coordinate Mg(2+): Asp-9 and Asp-104. Glu-105 is a catalytic residue. Disordered stretches follow at residues 364–383 (PDTD…STQV) and 429–449 (KGRT…DPLD).

This sequence belongs to the DNA polymerase type-Y family. Monomer. Mg(2+) serves as cofactor.

The protein localises to the cytoplasm. It carries out the reaction DNA(n) + a 2'-deoxyribonucleoside 5'-triphosphate = DNA(n+1) + diphosphate. Poorly processive, error-prone DNA polymerase involved in untargeted mutagenesis. Copies undamaged DNA at stalled replication forks, which arise in vivo from mismatched or misaligned primer ends. These misaligned primers can be extended by PolIV. Exhibits no 3'-5' exonuclease (proofreading) activity. May be involved in translesional synthesis, in conjunction with the beta clamp from PolIII. This Corynebacterium glutamicum (strain ATCC 13032 / DSM 20300 / JCM 1318 / BCRC 11384 / CCUG 27702 / LMG 3730 / NBRC 12168 / NCIMB 10025 / NRRL B-2784 / 534) protein is DNA polymerase IV.